Here is a 637-residue protein sequence, read N- to C-terminus: Chaperone protein DnaK (637 aa).

The residue at position 198 (threonine 198) is a Phosphothreonine; by autocatalysis. The disordered stretch occupies residues 597-637 (MYQQQAEGDAARDAAQDAAKDDVVDAEFTEVDDDKNDKKSA). Residues 605–619 (DAARDAAQDAAKDDV) show a composition bias toward basic and acidic residues. The segment covering 620-630 (VDAEFTEVDDD) has biased composition (acidic residues).

Belongs to the heat shock protein 70 family.

In terms of biological role, acts as a chaperone. The protein is Chaperone protein DnaK of Afipia carboxidovorans (strain ATCC 49405 / DSM 1227 / KCTC 32145 / OM5) (Oligotropha carboxidovorans).